The primary structure comprises 354 residues: Protein-arginine kinase (354 aa).

The 231-residue stretch at Ile24–Ala254 folds into the Phosphagen kinase C-terminal domain. Residues Ser27 to Arg31, His92, Arg125, Arg176 to Met180, and Arg207 to Glu212 contribute to the ATP site. Residues Arg337–Ala342 carry the RDXXRA motif of the pArg binding pocket involved in allosteric regulation motif.

This sequence belongs to the ATP:guanido phosphotransferase family.

The enzyme catalyses L-arginyl-[protein] + ATP = N(omega)-phospho-L-arginyl-[protein] + ADP + H(+). Its activity is regulated as follows. Appears to be allosterically activated by the binding of pArg-containing polypeptides to the pArg-binding pocket localized in the C-terminal domain of McsB. Functionally, catalyzes the specific phosphorylation of arginine residues in a large number of proteins. Is part of the bacterial stress response system. Protein arginine phosphorylation has a physiologically important role and is involved in the regulation of many critical cellular processes, such as protein homeostasis, motility, competence, and stringent and stress responses, by regulating gene expression and protein activity. This is Protein-arginine kinase from Bacillus anthracis (strain A0248).